The chain runs to 25 residues: Caerin-1.5 (25 aa).

Leucine 25 carries the leucine amide modification.

In terms of tissue distribution, expressed by the skin parotoid and/or rostral glands.

It is found in the secreted. Functionally, antibacterial peptide, that adopts an alpha helical conformation which can disrupt bacterial membranes. Each caerin displays a different antimicrobial specificity. This chain is Caerin-1.5, found in Ranoidea caerulea (Green tree frog).